Consider the following 292-residue polypeptide: 33 kDa chaperonin (292 aa).

Cystine bridges form between C230–C232 and C263–C266.

The protein belongs to the HSP33 family. In terms of processing, under oxidizing conditions two disulfide bonds are formed involving the reactive cysteines. Under reducing conditions zinc is bound to the reactive cysteines and the protein is inactive.

The protein localises to the cytoplasm. Its function is as follows. Redox regulated molecular chaperone. Protects both thermally unfolding and oxidatively damaged proteins from irreversible aggregation. Plays an important role in the bacterial defense system toward oxidative stress. In Sodalis glossinidius (strain morsitans), this protein is 33 kDa chaperonin.